Reading from the N-terminus, the 122-residue chain is Large ribosomal subunit protein uL18 (122 aa).

It belongs to the universal ribosomal protein uL18 family. Part of the 50S ribosomal subunit; part of the 5S rRNA/L5/L18/L25 subcomplex. Contacts the 5S and 23S rRNAs.

This is one of the proteins that bind and probably mediate the attachment of the 5S RNA into the large ribosomal subunit, where it forms part of the central protuberance. The polypeptide is Large ribosomal subunit protein uL18 (Thermotoga petrophila (strain ATCC BAA-488 / DSM 13995 / JCM 10881 / RKU-1)).